A 132-amino-acid chain; its full sequence is Large ribosomal subunit protein bL19 (132 aa).

It belongs to the bacterial ribosomal protein bL19 family.

Functionally, this protein is located at the 30S-50S ribosomal subunit interface and may play a role in the structure and function of the aminoacyl-tRNA binding site. In Methylobacterium radiotolerans (strain ATCC 27329 / DSM 1819 / JCM 2831 / NBRC 15690 / NCIMB 10815 / 0-1), this protein is Large ribosomal subunit protein bL19.